Consider the following 754-residue polypeptide: uncharacterized protein (754 aa).

The interval 1 to 110 (MNKGQNQVVP…RNMLGSLQKT (110 aa)) is disordered. Positions 15-25 (FGGQNPPQLSS) are enriched in polar residues. Residues 26–35 (IPPIVNPVVV) are compositionally biased toward low complexity. Residues 36 to 46 (QNRTSPGTPFI) show a composition bias toward polar residues. Over residues 49 to 60 (KAKEIYNRRQQE) the composition is skewed to basic and acidic residues. A compositionally biased stretch (acidic residues) spans 62–72 (ISSDSEEEESP). The span at 76–93 (AKSKYSRDSRDSRDTRDS) shows a compositional bias: basic and acidic residues.

Its subcellular location is the virion. This is an uncharacterized protein from Acanthamoeba polyphaga mimivirus (APMV).